Consider the following 274-residue polypeptide: Undecaprenyl-diphosphatase (274 aa).

8 helical membrane-spanning segments follow: residues 6–26 (SLFI…LPVS), 45–65 (AKTF…VMFW), 94–114 (GHIL…HDVI), 117–137 (LFAP…LLAA), 155–174 (YRQA…PGFS), 191–211 (YAAA…ASGL), 223–243 (GDLP…LIAI), and 253–273 (ISFV…YMVF).

The protein belongs to the UppP family.

The protein resides in the cell inner membrane. It catalyses the reaction di-trans,octa-cis-undecaprenyl diphosphate + H2O = di-trans,octa-cis-undecaprenyl phosphate + phosphate + H(+). Its function is as follows. Catalyzes the dephosphorylation of undecaprenyl diphosphate (UPP). Confers resistance to bacitracin. This chain is Undecaprenyl-diphosphatase, found in Serratia proteamaculans (strain 568).